The primary structure comprises 313 residues: Acetyl-coenzyme A carboxylase carboxyl transferase subunit alpha (313 aa).

One can recognise a CoA carboxyltransferase C-terminal domain in the interval 30–291 (DLDREISDLE…KMALLQELAF (262 aa)).

Belongs to the AccA family. Acetyl-CoA carboxylase is a heterohexamer composed of biotin carboxyl carrier protein (AccB), biotin carboxylase (AccC) and two subunits each of ACCase subunit alpha (AccA) and ACCase subunit beta (AccD).

The protein localises to the cytoplasm. The enzyme catalyses N(6)-carboxybiotinyl-L-lysyl-[protein] + acetyl-CoA = N(6)-biotinyl-L-lysyl-[protein] + malonyl-CoA. The protein operates within lipid metabolism; malonyl-CoA biosynthesis; malonyl-CoA from acetyl-CoA: step 1/1. Its function is as follows. Component of the acetyl coenzyme A carboxylase (ACC) complex. First, biotin carboxylase catalyzes the carboxylation of biotin on its carrier protein (BCCP) and then the CO(2) group is transferred by the carboxyltransferase to acetyl-CoA to form malonyl-CoA. In Zymomonas mobilis subsp. mobilis (strain ATCC 31821 / ZM4 / CP4), this protein is Acetyl-coenzyme A carboxylase carboxyl transferase subunit alpha.